The following is a 296-amino-acid chain: Phosphatidylserine decarboxylase proenzyme (296 aa).

Catalysis depends on charge relay system; for autoendoproteolytic cleavage activity residues Asp113, His169, and Ser256. The Schiff-base intermediate with substrate; via pyruvic acid; for decarboxylase activity role is filled by Ser256. A Pyruvic acid (Ser); by autocatalysis modification is found at Ser256.

It belongs to the phosphatidylserine decarboxylase family. PSD-B subfamily. Prokaryotic type II sub-subfamily. As to quaternary structure, heterodimer of a large membrane-associated beta subunit and a small pyruvoyl-containing alpha subunit. Pyruvate is required as a cofactor. In terms of processing, is synthesized initially as an inactive proenzyme. Formation of the active enzyme involves a self-maturation process in which the active site pyruvoyl group is generated from an internal serine residue via an autocatalytic post-translational modification. Two non-identical subunits are generated from the proenzyme in this reaction, and the pyruvate is formed at the N-terminus of the alpha chain, which is derived from the carboxyl end of the proenzyme. The autoendoproteolytic cleavage occurs by a canonical serine protease mechanism, in which the side chain hydroxyl group of the serine supplies its oxygen atom to form the C-terminus of the beta chain, while the remainder of the serine residue undergoes an oxidative deamination to produce ammonia and the pyruvoyl prosthetic group on the alpha chain. During this reaction, the Ser that is part of the protease active site of the proenzyme becomes the pyruvoyl prosthetic group, which constitutes an essential element of the active site of the mature decarboxylase.

It localises to the cell membrane. It catalyses the reaction a 1,2-diacyl-sn-glycero-3-phospho-L-serine + H(+) = a 1,2-diacyl-sn-glycero-3-phosphoethanolamine + CO2. It functions in the pathway phospholipid metabolism; phosphatidylethanolamine biosynthesis; phosphatidylethanolamine from CDP-diacylglycerol: step 2/2. In terms of biological role, catalyzes the formation of phosphatidylethanolamine (PtdEtn) from phosphatidylserine (PtdSer). This Clostridium botulinum (strain Eklund 17B / Type B) protein is Phosphatidylserine decarboxylase proenzyme.